We begin with the raw amino-acid sequence, 401 residues long: MKAFILAAGSGERLEPITHTRPKAFVPILSKPLIEYQIEYLRKCGIRDITVIVSSKNKEYFEKKLKEISIVTQKDDIKGTGAAILSAKFNDEALIIYGDLFFSNEKEICNIITLKENAIIGVKVSNPKDYGVLVLDNQNNLSKIIEKPEIPPSNLINAGIYKLNSDIFTYLDKISISERGELELTDAINLMAKDHRVKVIEYEGYWMDIGKPWNIIDVNKWALDNLVFSQNLGNVEDNVKIKGKVIIEEDAEIKSGTYIEGPVYIGKGSEIGPNSYLRPYTILVEKNKIGASVEVKESVIMEGSKIPHLSYVGDSVIAEDVNFGAGTLIANLRFDEKEVKVNVKGKRISSGRRKLGAFIGGHVRTGINVTILPGVKIGAYARIYPGAVVNRDVGYGEFFKV.

The interval 1 to 220 (MKAFILAAGS…KPWNIIDVNK (220 aa)) is nucleotidylyltransferase. A ribonucleoside 5'-triphosphate-binding positions include 8–13 (AGSGER), Gln-73, and Gly-79. N-acetyl-alpha-D-glucosamine 1-phosphate contacts are provided by Thr-80, Tyr-97, Gly-131, Glu-146, and Asn-157. Positions 236–401 (EDNVKIKGKV…DVGYGEFFKV (166 aa)) are acetyltransferase.

It in the N-terminal section; belongs to the N-acetylglucosamine-1-phosphate uridyltransferase family. In the C-terminal section; belongs to the transferase hexapeptide repeat family. Homotrimer. The cofactor is Co(2+). Mn(2+) is required as a cofactor.

It catalyses the reaction dTTP + alpha-D-glucose 1-phosphate + H(+) = dTDP-alpha-D-glucose + diphosphate. It carries out the reaction alpha-D-glucose 1-phosphate + UTP + H(+) = UDP-alpha-D-glucose + diphosphate. The catalysed reaction is N-acetyl-alpha-D-galactosamine 1-phosphate + UTP + H(+) = UDP-N-acetyl-alpha-D-galactosamine + diphosphate. The enzyme catalyses N-acetyl-alpha-D-glucosamine 1-phosphate + UTP + H(+) = UDP-N-acetyl-alpha-D-glucosamine + diphosphate. It catalyses the reaction alpha-D-galactosamine 1-phosphate + acetyl-CoA = N-acetyl-alpha-D-galactosamine 1-phosphate + CoA + H(+). It carries out the reaction alpha-D-glucosamine 1-phosphate + acetyl-CoA = N-acetyl-alpha-D-glucosamine 1-phosphate + CoA + H(+). Its pathway is nucleotide-sugar biosynthesis; UDP-N-acetyl-alpha-D-glucosamine biosynthesis; N-acetyl-alpha-D-glucosamine 1-phosphate from alpha-D-glucosamine 6-phosphate (route II): step 2/2. The protein operates within nucleotide-sugar biosynthesis; UDP-N-acetyl-alpha-D-glucosamine biosynthesis; UDP-N-acetyl-alpha-D-glucosamine from N-acetyl-alpha-D-glucosamine 1-phosphate: step 1/1. GlcN-1-P acetyltransferase activity is inhibited by divalent cations. GalN-1-P acetyltransferase activity is enhanced by Co(2+), Mg(2+) and Ca(2+), but inhibited by Zn(2+) or Mn(2+). Its function is as follows. Bifunctional enzyme involved in the synthesis of UDP-N-acetylglucosamine (UDP-GlcNAc) and UDP-N-acetylgalactosamine (UDP-GalNAc). It has multiple amino-sugar-1-phosphate acetyltransferase activities, including glucosamine-1-phosphate (GlcN-1-P) acetyltransferase and galactosamine-1-phosphate (GalN-1-P) acetyltransferase activities, and multiple sugar-1-phosphate nucleotidylyltransferase activities, including N-acetylglucosamine-1-phosphate (GlcNAc-1-P) uridyltransferase and N-acetylgalactosamine-1-phosphate (GalNAc-1-P) uridyltransferase activities. Also catalyzes the formation of dTDP-glucose from dTTP and glucose-1-phosphate (Glc-1-P), and the reverse reaction, which produces dTTP from dTDP-glucose and diphosphate. Can also catalyze the formation of UDP-glucose from UTP and glucose-1-phosphate. The protein is Bifunctional sugar-1-phosphate nucleotidylyltransferase/acetyltransferase of Sulfurisphaera tokodaii (strain DSM 16993 / JCM 10545 / NBRC 100140 / 7) (Sulfolobus tokodaii).